We begin with the raw amino-acid sequence, 200 residues long: MAFAEHSPLTPHRRDLCSRSIWLARKIRSDLTALMEAYVKHQGLNENINLDSVDGVPMASTDRWSELTEAERLQENLRAYRTFHVMLARLLEDQREHFTPAEDDFHQAIHTIVLQVAAFAYQLEELMVLLEHKVPPSEADGTPLSVGGGGLFEKKLWGLKVLQELSQWTVRSIRDLRVISSHQAGVPAHGSHHVAKDKKM.

Belongs to the CNTF family. Nervous system.

It localises to the cytoplasm. CNTF is a survival factor for various neuronal cell types. Seems to prevent the degeneration of motor axons after axotomy. The chain is Ciliary neurotrophic factor (CNTF) from Sus scrofa (Pig).